The primary structure comprises 690 residues: Methionine--tRNA ligase (690 aa).

Residues 12–22 (PYANGSIHLGH) carry the 'HIGH' region motif. Zn(2+)-binding residues include Cys-143, Cys-146, Cys-156, and Cys-159. The short motif at 328 to 332 (KMSKS) is the 'KMSKS' region element. Residue Lys-331 participates in ATP binding. The tRNA-binding domain maps to 582 to 690 (DFAKVDLRIA…SGAEPGMKVK (109 aa)).

The protein belongs to the class-I aminoacyl-tRNA synthetase family. MetG type 1 subfamily. In terms of assembly, homodimer. It depends on Zn(2+) as a cofactor.

The protein resides in the cytoplasm. The enzyme catalyses tRNA(Met) + L-methionine + ATP = L-methionyl-tRNA(Met) + AMP + diphosphate. In terms of biological role, is required not only for elongation of protein synthesis but also for the initiation of all mRNA translation through initiator tRNA(fMet) aminoacylation. This chain is Methionine--tRNA ligase, found in Thiobacillus denitrificans (strain ATCC 25259 / T1).